The chain runs to 188 residues: Elongation factor P (188 aa).

The residue at position 34 (Lys34) is an N6-(3,6-diaminohexanoyl)-5-hydroxylysine.

It belongs to the elongation factor P family. May be beta-lysylated on the epsilon-amino group of Lys-34 by the combined action of EpmA and EpmB, and then hydroxylated on the C5 position of the same residue by EpmC (if this protein is present). Lysylation is critical for the stimulatory effect of EF-P on peptide-bond formation. The lysylation moiety may extend toward the peptidyltransferase center and stabilize the terminal 3-CCA end of the tRNA. Hydroxylation of the C5 position on Lys-34 may allow additional potential stabilizing hydrogen-bond interactions with the P-tRNA.

Its subcellular location is the cytoplasm. Its pathway is protein biosynthesis; polypeptide chain elongation. Functionally, involved in peptide bond synthesis. Alleviates ribosome stalling that occurs when 3 or more consecutive Pro residues or the sequence PPG is present in a protein, possibly by augmenting the peptidyl transferase activity of the ribosome. Modification of Lys-34 is required for alleviation. This Enterobacter sp. (strain 638) protein is Elongation factor P.